The chain runs to 67 residues: MEGISLAKLLIVGALIVLLFGTKKLRSLGGDLGSAIKGFKKAMNDDSDATSKTASEDKNAGQAVHKE.

A helical membrane pass occupies residues 1–21 (MEGISLAKLLIVGALIVLLFG). The disordered stretch occupies residues 43-67 (MNDDSDATSKTASEDKNAGQAVHKE). The span at 54-67 (ASEDKNAGQAVHKE) shows a compositional bias: basic and acidic residues.

It belongs to the TatA/E family. TatE subfamily.

The protein resides in the cell inner membrane. Part of the twin-arginine translocation (Tat) system that transports large folded proteins containing a characteristic twin-arginine motif in their signal peptide across membranes. TatE shares overlapping functions with TatA. This chain is Probable Sec-independent protein translocase protein TatE, found in Erwinia tasmaniensis (strain DSM 17950 / CFBP 7177 / CIP 109463 / NCPPB 4357 / Et1/99).